A 123-amino-acid chain; its full sequence is UPF0102 protein PFL_5073 (123 aa).

It belongs to the UPF0102 family.

This is UPF0102 protein PFL_5073 from Pseudomonas fluorescens (strain ATCC BAA-477 / NRRL B-23932 / Pf-5).